The following is a 215-amino-acid chain: Histidine biosynthesis bifunctional protein HisIE (215 aa).

Residues 1–118 are phosphoribosyl-AMP cyclohydrolase; the sequence is MTKSISIEHL…YKNDVALLQI (118 aa). The segment at 119-215 is phosphoribosyl-ATP pyrophosphohydrolase; that stretch reads IPQVSAKIKE…HVEKEGQQRE (97 aa).

It in the N-terminal section; belongs to the PRA-CH family. This sequence in the C-terminal section; belongs to the PRA-PH family.

The protein localises to the cytoplasm. The enzyme catalyses 1-(5-phospho-beta-D-ribosyl)-ATP + H2O = 1-(5-phospho-beta-D-ribosyl)-5'-AMP + diphosphate + H(+). It carries out the reaction 1-(5-phospho-beta-D-ribosyl)-5'-AMP + H2O = 1-(5-phospho-beta-D-ribosyl)-5-[(5-phospho-beta-D-ribosylamino)methylideneamino]imidazole-4-carboxamide. It functions in the pathway amino-acid biosynthesis; L-histidine biosynthesis; L-histidine from 5-phospho-alpha-D-ribose 1-diphosphate: step 2/9. The protein operates within amino-acid biosynthesis; L-histidine biosynthesis; L-histidine from 5-phospho-alpha-D-ribose 1-diphosphate: step 3/9. The sequence is that of Histidine biosynthesis bifunctional protein HisIE from Oceanobacillus iheyensis (strain DSM 14371 / CIP 107618 / JCM 11309 / KCTC 3954 / HTE831).